We begin with the raw amino-acid sequence, 247 residues long: 5'-nucleotidase SurE (247 aa).

A divalent metal cation is bound by residues Asp8, Asp9, Ser39, and Asn91.

The protein belongs to the SurE nucleotidase family. The cofactor is a divalent metal cation.

The protein resides in the cytoplasm. The enzyme catalyses a ribonucleoside 5'-phosphate + H2O = a ribonucleoside + phosphate. In terms of biological role, nucleotidase that shows phosphatase activity on nucleoside 5'-monophosphates. The polypeptide is 5'-nucleotidase SurE (Leptospira biflexa serovar Patoc (strain Patoc 1 / Ames)).